A 46-amino-acid polypeptide reads, in one-letter code: AVKCIGWQETCNGKLPCCDGCVMCECNIMGQNCRCNHPKATSECES.

Disulfide bonds link Cys-4/Cys-18, Cys-11/Cys-24, Cys-17/Cys-35, Cys-21/Cys-44, and Cys-26/Cys-33.

Belongs to the neurotoxin 02 (plectoxin) family. 02 (plectoxin) subfamily. In terms of tissue distribution, expressed by the venom gland.

Its subcellular location is the secreted. Potent toxin that may paralyze and/or kill insect pests such as H.virescens (lepidoptera), S.exigua (beet armyworm) and M.sexta (tobacco hornworm). This is U1-plectoxin-Pt1f from Plectreurys tristis (Spider).